A 122-amino-acid chain; its full sequence is Large ribosomal subunit protein uL14 (122 aa).

The protein belongs to the universal ribosomal protein uL14 family. As to quaternary structure, part of the 50S ribosomal subunit. Forms a cluster with proteins L3 and L19. In the 70S ribosome, L14 and L19 interact and together make contacts with the 16S rRNA in bridges B5 and B8.

Functionally, binds to 23S rRNA. Forms part of two intersubunit bridges in the 70S ribosome. The chain is Large ribosomal subunit protein uL14 from Lactobacillus gasseri (strain ATCC 33323 / DSM 20243 / BCRC 14619 / CIP 102991 / JCM 1131 / KCTC 3163 / NCIMB 11718 / NCTC 13722 / AM63).